The following is a 234-amino-acid chain: Eosinophil granule major basic protein 2 (234 aa).

Residues 1-15 form the signal peptide; the sequence is MKLLLLLALLVGAVS. Residues 16–115 constitute a propeptide, acidic; it reads TRHLNVDTSS…VKFEGSPGCK (100 aa). The segment at 26 to 96 is disordered; sequence LQSLQGEESL…SSELDMGPED (71 aa). Serine 69 is a glycosylation site (O-linked (Xyl...) (glycosaminoglycan) serine). A compositionally biased stretch (acidic residues) spans 71-94; the sequence is SEDDPEEEEEEKEMESSSELDMGP. The C-type lectin domain maps to 133–234; it reads SVCQRCFRGN…GVRRAFSCSY (102 aa). 2 disulfide bridges follow: cysteine 135/cysteine 232 and cysteine 209/cysteine 224.

Nitrated.

The protein resides in the cytoplasmic granule. Functionally, MBP may play some important roles in the allergic reactions and inflammations, since MBP is capable of releasing histamine from mast cells and damaging the epithelial cells of bronchial tubes. Antiparasitic and antibiotic. The polypeptide is Eosinophil granule major basic protein 2 (MBP2) (Cavia porcellus (Guinea pig)).